We begin with the raw amino-acid sequence, 414 residues long: Lysosome-associated membrane glycoprotein 1 (414 aa).

An N-terminal signal peptide occupies residues 1–18 (MGGAARAVLLGFLQASSS). The tract at residues 19–181 (FDVRDSTGKV…SANKTECRED (163 aa)) is first lumenal domain. The Lumenal portion of the chain corresponds to 19–379 (FDVRDSTGKV…EECQLDENNM (361 aa)). Cys29 and Cys67 are disulfide-bonded. N-linked (GlcNAc...) asparagine glycans are attached at residues Asn33, Asn58, Asn71, Asn90, Asn108, Asn117, Asn154, Asn159, Asn168, and Asn174. A disulfide bridge connects residues Cys142 and Cys178. The hinge stretch occupies residues 182–224 (MVSTTTVAPTTPKHATSQVPTTSPAPTAAPSSPAVGKYNVTGA). Residues 186–213 (TTVAPTTPKHATSQVPTTSPAPTAAPSS) are disordered. Low complexity predominate over residues 196–213 (ATSQVPTTSPAPTAAPSS). N-linked (GlcNAc...) asparagine glycosylation is found at Asn220, Asn225, Asn238, Asn259, Asn289, Asn301, and Asn319. The second lumenal domain stretch occupies residues 225–379 (NGTCVLASMG…EECQLDENNM (155 aa)). An intrachain disulfide couples Cys228 to Cys266. Cys335 and Cys372 are disulfide-bonded. The helical transmembrane segment at 380 to 403 (LIPIIVGAALAGLVLIVLIAYLIG) threads the bilayer. Residues 404–414 (RKRSHAGYQTI) lie on the Cytoplasmic side of the membrane.

This sequence belongs to the LAMP family.

It is found in the lysosome membrane. It localises to the endosome membrane. The protein localises to the late endosome membrane. The protein resides in the cell membrane. Its subcellular location is the cytolytic granule membrane. Lysosomal membrane glycoprotein which plays an important role in lysosome biogenesis, lysosomal pH regulation, autophagy and cholesterol homeostasis. Functionally, (Microbial infection) Plays an essential role in efficient replication and spread of Marek's disease virus, by facilitating viral cell-to-cell spread. This chain is Lysosome-associated membrane glycoprotein 1 (LAMP1), found in Gallus gallus (Chicken).